The following is a 328-amino-acid chain: Cytochrome f (328 aa).

A signal peptide spans 1–44 (MRTPDFSAIWQASKQLTARIILLAFATFALYVFHDLAFPQGAAA). Heme is bound by residues Y45, C66, C69, and H70. The chain crosses the membrane as a helical span at residues 294-314 (IKGLMVFLAGIMLAQILLVIK).

Belongs to the cytochrome f family. As to quaternary structure, the 4 large subunits of the cytochrome b6-f complex are cytochrome b6, subunit IV (17 kDa polypeptide, PetD), cytochrome f and the Rieske protein, while the 4 small subunits are PetG, PetL, PetM and PetN. The complex functions as a dimer. It depends on heme as a cofactor.

It is found in the cellular thylakoid membrane. Functionally, component of the cytochrome b6-f complex, which mediates electron transfer between photosystem II (PSII) and photosystem I (PSI), cyclic electron flow around PSI, and state transitions. This chain is Cytochrome f, found in Rippkaea orientalis (strain PCC 8801 / RF-1) (Cyanothece sp. (strain PCC 8801)).